Consider the following 156-residue polypeptide: Cyanate hydratase (156 aa).

Residues Arg-96, Glu-99, and Ser-122 contribute to the active site.

The protein belongs to the cyanase family.

The catalysed reaction is cyanate + hydrogencarbonate + 3 H(+) = NH4(+) + 2 CO2. Its function is as follows. Catalyzes the reaction of cyanate with bicarbonate to produce ammonia and carbon dioxide. In Burkholderia orbicola (strain MC0-3), this protein is Cyanate hydratase.